Consider the following 120-residue polypeptide: Large ribosomal subunit protein bL20 (120 aa).

Belongs to the bacterial ribosomal protein bL20 family.

Binds directly to 23S ribosomal RNA and is necessary for the in vitro assembly process of the 50S ribosomal subunit. It is not involved in the protein synthesizing functions of that subunit. The sequence is that of Large ribosomal subunit protein bL20 from Methylacidiphilum infernorum (isolate V4) (Methylokorus infernorum (strain V4)).